The following is a 226-amino-acid chain: N-(5'-phosphoribosyl)anthranilate isomerase (226 aa).

This sequence belongs to the TrpF family.

The enzyme catalyses N-(5-phospho-beta-D-ribosyl)anthranilate = 1-(2-carboxyphenylamino)-1-deoxy-D-ribulose 5-phosphate. It functions in the pathway amino-acid biosynthesis; L-tryptophan biosynthesis; L-tryptophan from chorismate: step 3/5. The sequence is that of N-(5'-phosphoribosyl)anthranilate isomerase (trpF) from Methanothermobacter marburgensis (strain ATCC BAA-927 / DSM 2133 / JCM 14651 / NBRC 100331 / OCM 82 / Marburg) (Methanobacterium thermoautotrophicum).